The following is a 183-amino-acid chain: A-type ATP synthase subunit E (183 aa).

It belongs to the V-ATPase E subunit family. As to quaternary structure, has multiple subunits with at least A(3), B(3), C, D, E, F, H, I and proteolipid K(x).

It is found in the cell membrane. Its function is as follows. Component of the A-type ATP synthase that produces ATP from ADP in the presence of a proton gradient across the membrane. The chain is A-type ATP synthase subunit E from Methanococcoides burtonii (strain DSM 6242 / NBRC 107633 / OCM 468 / ACE-M).